Reading from the N-terminus, the 104-residue chain is ATP-dependent Clp protease adapter protein ClpS (104 aa).

Belongs to the ClpS family. In terms of assembly, binds to the N-terminal domain of the chaperone ClpA.

Its function is as follows. Involved in the modulation of the specificity of the ClpAP-mediated ATP-dependent protein degradation. The chain is ATP-dependent Clp protease adapter protein ClpS from Bordetella bronchiseptica (strain ATCC BAA-588 / NCTC 13252 / RB50) (Alcaligenes bronchisepticus).